A 167-amino-acid polypeptide reads, in one-letter code: uncharacterized protein (167 aa).

To A.thaliana At2g20940.

This is an uncharacterized protein from Schizosaccharomyces pombe (strain 972 / ATCC 24843) (Fission yeast).